The chain runs to 211 residues: LexA repressor (211 aa).

A DNA-binding region (H-T-H motif) is located at residues 31–51; sequence RAEISKELGFRSPNAAEEHLK. Catalysis depends on for autocatalytic cleavage activity residues serine 127 and lysine 164.

This sequence belongs to the peptidase S24 family. As to quaternary structure, homodimer.

The enzyme catalyses Hydrolysis of Ala-|-Gly bond in repressor LexA.. Represses a number of genes involved in the response to DNA damage (SOS response), including recA and lexA. In the presence of single-stranded DNA, RecA interacts with LexA causing an autocatalytic cleavage which disrupts the DNA-binding part of LexA, leading to derepression of the SOS regulon and eventually DNA repair. This Pasteurella multocida (strain Pm70) protein is LexA repressor.